Here is an 860-residue protein sequence, read N- to C-terminus: Eukaryotic translation initiation factor 3 subunit C (860 aa).

The segment at 1–76 (MSRFFYGNDS…SEESEEEDVV (76 aa)) is disordered. Acidic residues predominate over residues 10 to 51 (SDSDSSGSDEEELYSDEEVEQSEEESSEEDASSEEESSEDED). The 175-residue stretch at 599-773 (FHMHINLELL…DAIVFRKGVE (175 aa)) folds into the PCI domain. The interval 812-860 (RDQGAGARGGRGPRGGGQARGGPRLPGGQQRRPGGQQFGGGALGGAIKA) is disordered. The segment covering 817-831 (GARGGRGPRGGGQAR) has biased composition (gly residues). Residues 832–846 (GGPRLPGGQQRRPGG) are compositionally biased toward low complexity. Positions 847-860 (QQFGGGALGGAIKA) are enriched in gly residues.

Belongs to the eIF-3 subunit C family. Component of the eukaryotic translation initiation factor 3 (eIF-3) complex.

It localises to the cytoplasm. Functionally, component of the eukaryotic translation initiation factor 3 (eIF-3) complex, which is involved in protein synthesis of a specialized repertoire of mRNAs and, together with other initiation factors, stimulates binding of mRNA and methionyl-tRNAi to the 40S ribosome. The eIF-3 complex specifically targets and initiates translation of a subset of mRNAs involved in cell proliferation. This is Eukaryotic translation initiation factor 3 subunit C (nip1) from Emericella nidulans (strain FGSC A4 / ATCC 38163 / CBS 112.46 / NRRL 194 / M139) (Aspergillus nidulans).